The primary structure comprises 1134 residues: TBC1 domain family member 8 (1134 aa).

GRAM domains lie at 145 to 212 (VKFE…ERTS) and 285 to 353 (EFFR…EKME). The interval 433 to 466 (ASQSSEEREEKRPLPHPEPLTAVFQQSGSQSPDS) is disordered. Positions 437 to 447 (SEEREEKRPLP) are enriched in basic and acidic residues. Polar residues predominate over residues 455–466 (VFQQSGSQSPDS). Residues 504-691 (GIPESLRGRL…HVVDCFFYDG (188 aa)) enclose the Rab-GAP TBC domain. Positions 1034-1070 (SSSGSCSQECEEPQASAPPEQDSVFAEAGKSPQAFPE) are disordered.

Its function is as follows. May act as a GTPase-activating protein for Rab family protein(s). The protein is TBC1 domain family member 8 (Tbc1d8) of Mus musculus (Mouse).